The chain runs to 315 residues: Probable cell division protein WhiA (315 aa).

The H-T-H motif DNA-binding region spans 274-308; sequence SLKNLGELIPGGPISKSGINHRLRKLNEIAEKIRA.

Belongs to the WhiA family.

Involved in cell division and chromosome segregation. This is Probable cell division protein WhiA from Ligilactobacillus salivarius (strain UCC118) (Lactobacillus salivarius).